The chain runs to 648 residues: ATP-dependent DNA helicase Q1 (648 aa).

The region spanning 100-275 (INVTMARKDI…QKILCVGKCL (176 aa)) is the Helicase ATP-binding domain. Residue 113-120 (MPTGGGKS) participates in ATP binding. A DEVH box motif is present at residues 219-222 (DEVH). The Helicase C-terminal domain maps to 299–451 (DFTEDIVKLI…EMVSYCQNVS (153 aa)). The Zn(2+) site is built by Cys453, Cys471, Cys475, and Cys478. Residues Lys514 and Lys522 each carry the N6-acetyllysine modification. Ser597 bears the Phosphoserine mark. Residues 601–648 (ALSEARQVEQVDSKGEEQSSGNSQKSKSRLQPSGSKNAGAKKRKLDDA) are disordered. Residues 606–617 (RQVEQVDSKGEE) show a composition bias toward basic and acidic residues. Residues 618–636 (QSSGNSQKSKSRLQPSGSK) are compositionally biased toward polar residues. Position 633 is a phosphoserine (Ser633). Over residues 639–648 (GAKKRKLDDA) the composition is skewed to basic residues.

This sequence belongs to the helicase family. RecQ subfamily. In terms of assembly, may form homodimers or higher order oligomers. Interacts with EXO1. Interacts with MLH1. Interacts with PARP1. It depends on Mg(2+) as a cofactor. Mn(2+) is required as a cofactor. The cofactor is Zn(2+). Expressed in all tissues examined. In terms of tissue distribution, only expressed in spermatocytes. Expression increases at pachytene (17 days old) and decreases after completion of meiosis II (7 weeks old).

Its subcellular location is the nucleus. It catalyses the reaction Couples ATP hydrolysis with the unwinding of duplex DNA by translocating in the 3'-5' direction.. It carries out the reaction ATP + H2O = ADP + phosphate + H(+). The enzyme catalyses dATP + H2O = dADP + phosphate + H(+). Functionally, DNA helicase that plays a role in DNA damage repair and genome stability. Exhibits a magnesium- and ATP-dependent DNA-helicase activity that unwinds single- and double-stranded DNA in a 3'-5' direction. Plays a role in restoring regressed replication forks. Required to restart stalled replication forks induced by abortive topoisomerase 1 and 2 lesions. May play a role in the repair of DNA that is damaged by ultraviolet light or other mutagens. The protein is ATP-dependent DNA helicase Q1 (Recql) of Mus musculus (Mouse).